The primary structure comprises 475 residues: NADH-quinone oxidoreductase subunit N 1 (475 aa).

A run of 14 helical transmembrane segments spans residues 8-28, 36-56, 67-87, 100-120, 122-142, 157-177, 199-219, 244-264, 268-288, 295-315, 322-342, 366-386, 403-423, and 443-463; these read VMPLMTASGISILLILVEAAT, LFAILGFLLVFLSLPFSPSEP, GGFFTYTATVFSIGGLLITLI, GEYYIILFMAVVGMMLMSAAA, LTILFIGLELMSIALYVLAGI, FLLGAFASGIFLYGIALIYGA, FLSGIALLMIGLLFKVAAVPF, AAALSSMILVGISIAPILETF, PTAIAMIATLTMFFGNIAALI, MFAYSSIAHAGYMLIGIATGT, VLYYIFLYTLMNIGAFGIIIL, AFLMAMFMFSLAGIPPFGGFI, LAVAGVIASAVSVSYYLRVVI, and ATIALVAFLVLLFGIYPSLLI.

The protein belongs to the complex I subunit 2 family. As to quaternary structure, NDH-1 is composed of 14 different subunits. Subunits NuoA, H, J, K, L, M, N constitute the membrane sector of the complex.

The protein resides in the cell inner membrane. The enzyme catalyses a quinone + NADH + 5 H(+)(in) = a quinol + NAD(+) + 4 H(+)(out). NDH-1 shuttles electrons from NADH, via FMN and iron-sulfur (Fe-S) centers, to quinones in the respiratory chain. The immediate electron acceptor for the enzyme in this species is believed to be a menaquinone. Couples the redox reaction to proton translocation (for every two electrons transferred, four hydrogen ions are translocated across the cytoplasmic membrane), and thus conserves the redox energy in a proton gradient. This Chloroherpeton thalassium (strain ATCC 35110 / GB-78) protein is NADH-quinone oxidoreductase subunit N 1.